The following is a 130-amino-acid chain: Small ribosomal subunit protein uS9 (130 aa).

It belongs to the universal ribosomal protein uS9 family.

The chain is Small ribosomal subunit protein uS9 from Enterococcus faecalis (strain ATCC 700802 / V583).